The chain runs to 572 residues: Arginine--tRNA ligase (572 aa).

Residues 127 to 137 (ANPTGPLHVGH) carry the 'HIGH' region motif.

Belongs to the class-I aminoacyl-tRNA synthetase family. Monomer.

It is found in the cytoplasm. It catalyses the reaction tRNA(Arg) + L-arginine + ATP = L-arginyl-tRNA(Arg) + AMP + diphosphate. This chain is Arginine--tRNA ligase, found in Vesicomyosocius okutanii subsp. Calyptogena okutanii (strain HA).